The sequence spans 350 residues: Phosphate acyltransferase (350 aa).

The protein belongs to the PlsX family. Homodimer. Probably interacts with PlsY.

The protein localises to the cytoplasm. The catalysed reaction is a fatty acyl-[ACP] + phosphate = an acyl phosphate + holo-[ACP]. The protein operates within lipid metabolism; phospholipid metabolism. In terms of biological role, catalyzes the reversible formation of acyl-phosphate (acyl-PO(4)) from acyl-[acyl-carrier-protein] (acyl-ACP). This enzyme utilizes acyl-ACP as fatty acyl donor, but not acyl-CoA. In Phenylobacterium zucineum (strain HLK1), this protein is Phosphate acyltransferase.